Reading from the N-terminus, the 382-residue chain is MRKELKYLICFNILLLLSIIYYTFDLLTLCIDDTVKDAILEEDLNPDAPPKPQLIPKIIHQTYKTEDIPEHWKEGRQKCLDLHPDYKYILWTDEMAYEFIKEEYPWFLDTFENYKYPIERADAIRYFILSHYGGVYIDLDDGCERKLDPLLAFPAFLRKTSPLGVSNDVMGSVPRHPFFLKALKSLKHYDKYWFIPYMTIMGSTGPLFLSVIWKQYKRWRIPKNGTVRILQPAYYKMHSYSFFSITKGSSWHLDDAKLMKALENHILSCVVTGFIFGFFILYGEFTFYCWLCSKNFSNLTKNWKLNAIKVRFVTILNSLGLRLKLSKSTSDTASATLLARQQKRLRKDSNTNIVLLKSSRKSDVYDLEKNDSSKYSLGNNSS.

Residues 1–6 (MRKELK) lie on the Cytoplasmic side of the membrane. A helical membrane pass occupies residues 7-27 (YLICFNILLLLSIIYYTFDLL). The Extracellular segment spans residues 28–269 (TLCIDDTVKD…KALENHILSC (242 aa)). A helical membrane pass occupies residues 270-290 (VVTGFIFGFFILYGEFTFYCW). Topologically, residues 291–382 (LCSKNFSNLT…SKYSLGNNSS (92 aa)) are cytoplasmic. Ser-349 carries the post-translational modification Phosphoserine.

It belongs to the glycosyltransferase 32 family. In terms of assembly, heterodimer of SUR1 and CSG2.

It localises to the membrane. The catalysed reaction is a 1D-myo-inositol-1-phospho-N-[(R)-2-hydroxy-very-long-chain fatty acyl]-(R)-4-hydroxysphingoid base + GDP-alpha-D-mannose = an alpha-D-mannosyl-(1&lt;-&gt;6)-1D-myo-inositol-1-phospho-N-[(R)-2-hydroxy-very-long-chain fatty acyl]-(R)-4-hydroxysphingoid base + GDP + H(+). Its function is as follows. Involved in the synthesis of mannosyl phosphorylinositol ceramide. Catalyzes the addition of mannosyl to phosphorylinositol ceramide. Suppressor of RVS161 mutation. The polypeptide is Mannosyl phosphorylinositol ceramide synthase SUR1 (Saccharomyces cerevisiae (strain ATCC 204508 / S288c) (Baker's yeast)).